The following is a 215-amino-acid chain: ATP-dependent Clp protease proteolytic subunit 1 (215 aa).

Ser-108 functions as the Nucleophile in the catalytic mechanism. The active site involves His-133.

Belongs to the peptidase S14 family. As to quaternary structure, fourteen ClpP subunits assemble into 2 heptameric rings which stack back to back to give a disk-like structure with a central cavity, resembling the structure of eukaryotic proteasomes.

The protein localises to the cytoplasm. The enzyme catalyses Hydrolysis of proteins to small peptides in the presence of ATP and magnesium. alpha-casein is the usual test substrate. In the absence of ATP, only oligopeptides shorter than five residues are hydrolyzed (such as succinyl-Leu-Tyr-|-NHMec, and Leu-Tyr-Leu-|-Tyr-Trp, in which cleavage of the -Tyr-|-Leu- and -Tyr-|-Trp bonds also occurs).. Functionally, cleaves peptides in various proteins in a process that requires ATP hydrolysis. Has a chymotrypsin-like activity. Plays a major role in the degradation of misfolded proteins. This Paraburkholderia xenovorans (strain LB400) protein is ATP-dependent Clp protease proteolytic subunit 1.